The following is a 158-amino-acid chain: Large ribosomal subunit protein uL15 (158 aa).

Positions 1-13 (MKLNEIKDNEGST) are enriched in basic and acidic residues. Residues 1–45 (MKLNEIKDNEGSTHSRKRLGRGIGSGSGKTGGRGVKGQKSRSGVA) are disordered. Gly residues predominate over residues 21-35 (RGIGSGSGKTGGRGV).

The protein belongs to the universal ribosomal protein uL15 family. In terms of assembly, part of the 50S ribosomal subunit.

Binds to the 23S rRNA. The sequence is that of Large ribosomal subunit protein uL15 from Rhizobium leguminosarum bv. trifolii (strain WSM2304).